Consider the following 122-residue polypeptide: Large ribosomal subunit protein bL12 (122 aa).

It belongs to the bacterial ribosomal protein bL12 family. As to quaternary structure, homodimer. Part of the ribosomal stalk of the 50S ribosomal subunit. Forms a multimeric L10(L12)X complex, where L10 forms an elongated spine to which 2 to 4 L12 dimers bind in a sequential fashion. Binds GTP-bound translation factors.

Forms part of the ribosomal stalk which helps the ribosome interact with GTP-bound translation factors. Is thus essential for accurate translation. This is Large ribosomal subunit protein bL12 from Buchnera aphidicola subsp. Cinara cedri (strain Cc).